The sequence spans 292 residues: Diaminopimelate epimerase (292 aa).

2 residues coordinate substrate: N14 and N81. The active-site Proton donor is C90. Substrate-binding positions include 91–92 (GN), N166, N202, and 220–221 (ER). C229 functions as the Proton acceptor in the catalytic mechanism. 230-231 (GT) contacts substrate.

Belongs to the diaminopimelate epimerase family. Homodimer.

It is found in the cytoplasm. It carries out the reaction (2S,6S)-2,6-diaminopimelate = meso-2,6-diaminopimelate. It participates in amino-acid biosynthesis; L-lysine biosynthesis via DAP pathway; DL-2,6-diaminopimelate from LL-2,6-diaminopimelate: step 1/1. Catalyzes the stereoinversion of LL-2,6-diaminopimelate (L,L-DAP) to meso-diaminopimelate (meso-DAP), a precursor of L-lysine and an essential component of the bacterial peptidoglycan. The chain is Diaminopimelate epimerase from Rhodococcus erythropolis (strain PR4 / NBRC 100887).